A 222-amino-acid chain; its full sequence is Probable transaldolase (222 aa).

Lysine 91 (schiff-base intermediate with substrate) is an active-site residue.

The protein belongs to the transaldolase family. Type 3B subfamily.

It localises to the cytoplasm. The enzyme catalyses D-sedoheptulose 7-phosphate + D-glyceraldehyde 3-phosphate = D-erythrose 4-phosphate + beta-D-fructose 6-phosphate. It participates in carbohydrate degradation; pentose phosphate pathway; D-glyceraldehyde 3-phosphate and beta-D-fructose 6-phosphate from D-ribose 5-phosphate and D-xylulose 5-phosphate (non-oxidative stage): step 2/3. Functionally, transaldolase is important for the balance of metabolites in the pentose-phosphate pathway. This chain is Probable transaldolase, found in Chlorobium phaeovibrioides (strain DSM 265 / 1930) (Prosthecochloris vibrioformis (strain DSM 265)).